A 342-amino-acid polypeptide reads, in one-letter code: Elongation factor Ts (342 aa).

The tract at residues 79–82 (TDFV) is involved in Mg(2+) ion dislocation from EF-Tu.

The protein belongs to the EF-Ts family.

The protein resides in the cytoplasm. Functionally, associates with the EF-Tu.GDP complex and induces the exchange of GDP to GTP. It remains bound to the aminoacyl-tRNA.EF-Tu.GTP complex up to the GTP hydrolysis stage on the ribosome. In Lactococcus lactis subsp. cremoris (strain MG1363), this protein is Elongation factor Ts.